The sequence spans 439 residues: MKKPLRWLAALTALLLPLSAFAQQQGLTIDIVGGSASATPITVVPMPYQGSGTAPQTDVSAVVSADLDRSGQFRTLPAAQIVEKPTRGTEVQFQTWRTLKQNYIVVGRVMDAGEGAYRVEYELFDVAKGERLLGLAMTARANAMRDVSHQMADAIYEKVTGVRGAFWTRIAYVTASGSGGSMRYALMVADSDGYNPQTIVRSAEPLLSPNWSPDGKKLAYVSFERGNSSIYLQDIASGARELVSSFRGINGAPSFSPDGRRLALALSRSGNPEIYVMDLGSKQLTQLTNHFGIDTEPTWAPDGGSIYFTSDRGGRPQIYQVAASGGSANRVTFQGNYNATASVSFDGKKVAVAQGSGNTYRIAMMDRSLGSPSWSTLSPGSLDESPSFAPNASMVLYAAREGGRGVLYAVSADARVRQRLVLADGDVREPAWGPYRTAH.

The N-terminal stretch at methionine 1–alanine 22 is a signal peptide.

Belongs to the TolB family. In terms of assembly, the Tol-Pal system is composed of five core proteins: the inner membrane proteins TolA, TolQ and TolR, the periplasmic protein TolB and the outer membrane protein Pal. They form a network linking the inner and outer membranes and the peptidoglycan layer.

The protein localises to the periplasm. Its function is as follows. Part of the Tol-Pal system, which plays a role in outer membrane invagination during cell division and is important for maintaining outer membrane integrity. The chain is Tol-Pal system protein TolB from Xanthomonas campestris pv. campestris (strain 8004).